The following is a 276-amino-acid chain: Large ribosomal subunit protein uL2 (276 aa).

Disordered regions lie at residues 1-20 (MGIK…TTND) and 219-276 (TVRG…RRKK). The segment covering 7–20 (NPTTNGRRNMTTND) has biased composition (polar residues).

The protein belongs to the universal ribosomal protein uL2 family. As to quaternary structure, part of the 50S ribosomal subunit. Forms a bridge to the 30S subunit in the 70S ribosome.

One of the primary rRNA binding proteins. Required for association of the 30S and 50S subunits to form the 70S ribosome, for tRNA binding and peptide bond formation. It has been suggested to have peptidyltransferase activity; this is somewhat controversial. Makes several contacts with the 16S rRNA in the 70S ribosome. The polypeptide is Large ribosomal subunit protein uL2 (Bacillus mycoides (strain KBAB4) (Bacillus weihenstephanensis)).